A 447-amino-acid chain; its full sequence is ATP-dependent protease ATPase subunit HslU (447 aa).

Residues Ile-18, Gly-60–Glu-65, Asp-259, Glu-325, and Arg-397 contribute to the ATP site.

The protein belongs to the ClpX chaperone family. HslU subfamily. As to quaternary structure, a double ring-shaped homohexamer of HslV is capped on each side by a ring-shaped HslU homohexamer. The assembly of the HslU/HslV complex is dependent on binding of ATP.

The protein resides in the cytoplasm. Functionally, ATPase subunit of a proteasome-like degradation complex; this subunit has chaperone activity. The binding of ATP and its subsequent hydrolysis by HslU are essential for unfolding of protein substrates subsequently hydrolyzed by HslV. HslU recognizes the N-terminal part of its protein substrates and unfolds these before they are guided to HslV for hydrolysis. The protein is ATP-dependent protease ATPase subunit HslU of Burkholderia ambifaria (strain MC40-6).